A 426-amino-acid polypeptide reads, in one-letter code: Serine--tRNA ligase (426 aa).

228–230 lines the L-serine pocket; it reads TSE. ATP-binding positions include 259–261 and Val-275; that span reads RRE. An L-serine-binding site is contributed by Glu-282. 346 to 349 provides a ligand contact to ATP; it reads ELTS. L-serine is bound at residue Thr-386.

The protein belongs to the class-II aminoacyl-tRNA synthetase family. Type-1 seryl-tRNA synthetase subfamily. Homodimer. The tRNA molecule binds across the dimer.

The protein localises to the cytoplasm. The catalysed reaction is tRNA(Ser) + L-serine + ATP = L-seryl-tRNA(Ser) + AMP + diphosphate + H(+). It carries out the reaction tRNA(Sec) + L-serine + ATP = L-seryl-tRNA(Sec) + AMP + diphosphate + H(+). It functions in the pathway aminoacyl-tRNA biosynthesis; selenocysteinyl-tRNA(Sec) biosynthesis; L-seryl-tRNA(Sec) from L-serine and tRNA(Sec): step 1/1. Its function is as follows. Catalyzes the attachment of serine to tRNA(Ser). Is also able to aminoacylate tRNA(Sec) with serine, to form the misacylated tRNA L-seryl-tRNA(Sec), which will be further converted into selenocysteinyl-tRNA(Sec). The polypeptide is Serine--tRNA ligase (Arthrobacter sp. (strain FB24)).